Reading from the N-terminus, the 701-residue chain is Methionine--tRNA ligase (701 aa).

Residues 13–23 (PYANGSIHLGH) carry the 'HIGH' region motif. Residues Cys144, Cys147, Cys157, and Cys160 each coordinate Zn(2+). The 'KMSKS' region motif lies at 336–340 (KMSKS). Residue Lys339 coordinates ATP. In terms of domain architecture, tRNA-binding spans 600-701 (DFSKIDLRIA…SGAQPGMRVK (102 aa)).

Belongs to the class-I aminoacyl-tRNA synthetase family. MetG type 1 subfamily. As to quaternary structure, homodimer. It depends on Zn(2+) as a cofactor.

It is found in the cytoplasm. The catalysed reaction is tRNA(Met) + L-methionine + ATP = L-methionyl-tRNA(Met) + AMP + diphosphate. Is required not only for elongation of protein synthesis but also for the initiation of all mRNA translation through initiator tRNA(fMet) aminoacylation. The protein is Methionine--tRNA ligase of Nitrosomonas eutropha (strain DSM 101675 / C91 / Nm57).